The chain runs to 662 residues: Histidine decarboxylase (662 aa).

Substrate is bound by residues tyrosine 81 and histidine 194. Residue lysine 305 is modified to N6-(pyridoxal phosphate)lysine.

The protein belongs to the group II decarboxylase family. Homodimer. Pyridoxal 5'-phosphate serves as cofactor.

The catalysed reaction is L-histidine + H(+) = histamine + CO2. Its pathway is amine and polyamine biosynthesis; histamine biosynthesis; histamine from L-histidine: step 1/1. Functionally, catalyzes the biosynthesis of histamine from histidine. This is Histidine decarboxylase (HDC) from Homo sapiens (Human).